The following is a 665-amino-acid chain: Alpha-1,4-glucan:maltose-1-phosphate maltosyltransferase (665 aa).

Lysine 255, glutamine 315, and aspartate 350 together coordinate alpha-maltose 1-phosphate. Aspartate 386 (nucleophile) is an active-site residue. Asparagine 387 contacts alpha-maltose 1-phosphate. The Proton donor role is filled by glutamate 415. 526-527 (KY) lines the alpha-maltose 1-phosphate pocket.

The protein belongs to the glycosyl hydrolase 13 family. GlgE subfamily. As to quaternary structure, homodimer.

The enzyme catalyses alpha-maltose 1-phosphate + [(1-&gt;4)-alpha-D-glucosyl](n) = [(1-&gt;4)-alpha-D-glucosyl](n+2) + phosphate. Its function is as follows. Maltosyltransferase that uses maltose 1-phosphate (M1P) as the sugar donor to elongate linear or branched alpha-(1-&gt;4)-glucans. Is involved in a branched alpha-glucan biosynthetic pathway from trehalose, together with TreS, Mak and GlgB. The sequence is that of Alpha-1,4-glucan:maltose-1-phosphate maltosyltransferase from Myxococcus xanthus (strain DK1622).